A 264-amino-acid chain; its full sequence is Thymidylate synthase (264 aa).

A dUMP-binding site is contributed by Arg-21. Residue His-51 coordinates (6R)-5,10-methylene-5,6,7,8-tetrahydrofolate. 126-127 is a binding site for dUMP; that stretch reads RR. Cys-146 functions as the Nucleophile in the catalytic mechanism. DUMP is bound by residues 166–169, Asn-177, and 207–209; these read RSAD and HIY. Residue Asp-169 participates in (6R)-5,10-methylene-5,6,7,8-tetrahydrofolate binding. Residue Ser-263 coordinates (6R)-5,10-methylene-5,6,7,8-tetrahydrofolate.

The protein belongs to the thymidylate synthase family. Bacterial-type ThyA subfamily. As to quaternary structure, homodimer.

The protein localises to the cytoplasm. It carries out the reaction dUMP + (6R)-5,10-methylene-5,6,7,8-tetrahydrofolate = 7,8-dihydrofolate + dTMP. It functions in the pathway pyrimidine metabolism; dTTP biosynthesis. Catalyzes the reductive methylation of 2'-deoxyuridine-5'-monophosphate (dUMP) to 2'-deoxythymidine-5'-monophosphate (dTMP) while utilizing 5,10-methylenetetrahydrofolate (mTHF) as the methyl donor and reductant in the reaction, yielding dihydrofolate (DHF) as a by-product. This enzymatic reaction provides an intracellular de novo source of dTMP, an essential precursor for DNA biosynthesis. The protein is Thymidylate synthase of Phocaeicola vulgatus (strain ATCC 8482 / DSM 1447 / JCM 5826 / CCUG 4940 / NBRC 14291 / NCTC 11154) (Bacteroides vulgatus).